The following is a 668-amino-acid chain: DNA ligase (668 aa).

NAD(+) is bound by residues 32-36, 81-82, and Glu111; these read DAEYD and SL. The active-site N6-AMP-lysine intermediate is the Lys113. The NAD(+) site is built by Arg134, Glu171, Lys290, and Lys314. The Zn(2+) site is built by Cys408, Cys411, Cys426, and Cys432. Residues 591–668 form the BRCT domain; the sequence is EEDLSLKGQT…DEEALIAILS (78 aa).

It belongs to the NAD-dependent DNA ligase family. LigA subfamily. Mg(2+) is required as a cofactor. It depends on Mn(2+) as a cofactor.

The enzyme catalyses NAD(+) + (deoxyribonucleotide)n-3'-hydroxyl + 5'-phospho-(deoxyribonucleotide)m = (deoxyribonucleotide)n+m + AMP + beta-nicotinamide D-nucleotide.. DNA ligase that catalyzes the formation of phosphodiester linkages between 5'-phosphoryl and 3'-hydroxyl groups in double-stranded DNA using NAD as a coenzyme and as the energy source for the reaction. It is essential for DNA replication and repair of damaged DNA. This is DNA ligase from Shewanella pealeana (strain ATCC 700345 / ANG-SQ1).